Consider the following 253-residue polypeptide: Imidazole glycerol phosphate synthase subunit HisF (253 aa).

Residues D11 and D130 contribute to the active site.

The protein belongs to the HisA/HisF family. Heterodimer of HisH and HisF.

The protein resides in the cytoplasm. The catalysed reaction is 5-[(5-phospho-1-deoxy-D-ribulos-1-ylimino)methylamino]-1-(5-phospho-beta-D-ribosyl)imidazole-4-carboxamide + L-glutamine = D-erythro-1-(imidazol-4-yl)glycerol 3-phosphate + 5-amino-1-(5-phospho-beta-D-ribosyl)imidazole-4-carboxamide + L-glutamate + H(+). It participates in amino-acid biosynthesis; L-histidine biosynthesis; L-histidine from 5-phospho-alpha-D-ribose 1-diphosphate: step 5/9. IGPS catalyzes the conversion of PRFAR and glutamine to IGP, AICAR and glutamate. The HisF subunit catalyzes the cyclization activity that produces IGP and AICAR from PRFAR using the ammonia provided by the HisH subunit. The chain is Imidazole glycerol phosphate synthase subunit HisF from Clostridium botulinum (strain Kyoto / Type A2).